Reading from the N-terminus, the 104-residue chain is Transcription factor ILI1 (104 aa).

Residues 1–11 show a composition bias toward basic residues; it reads MSSSRRSRSRR. Residues 1-27 are disordered; it reads MSSSRRSRSRRAGSSVPSSSSSSRTSI. The span at 12-27 shows a compositional bias: low complexity; sequence AGSSVPSSSSSSRTSI. A bHLH domain is found at 16–71; that stretch reads VPSSSSSSRTSISEDQIAELLSKLQALLPESQARNGAHRGSAARVLQETCSYIRSL.

This sequence belongs to the bHLH protein family. In terms of assembly, interacts with IBH1.

Atypical and probable non DNA-binding bHLH transcription factor that acts as a positive regulator of cell elongation and plant development. Binds the transcription repressor IBH1 and forms a heterodimer of antagonistic bHLH transcription factors that function downstream of BZR1 to mediate brassinosteroid regulation of cell elongation and lamina inclination. The protein is Transcription factor ILI1 (ILI1) of Oryza sativa subsp. indica (Rice).